A 249-amino-acid polypeptide reads, in one-letter code: Bis(5'-nucleosyl)-tetraphosphatase PrpE [asymmetrical] (249 aa).

The protein belongs to the PrpE family. It depends on Ni(2+) as a cofactor.

The catalysed reaction is P(1),P(4)-bis(5'-guanosyl) tetraphosphate + H2O = GMP + GTP + 2 H(+). Asymmetrically hydrolyzes Ap4p to yield AMP and ATP. The polypeptide is Bis(5'-nucleosyl)-tetraphosphatase PrpE [asymmetrical] (Bacillus velezensis (strain DSM 23117 / BGSC 10A6 / LMG 26770 / FZB42) (Bacillus amyloliquefaciens subsp. plantarum)).